The primary structure comprises 473 residues: Cysteine--tRNA ligase (473 aa).

Position 28 (Cys-28) interacts with Zn(2+). A 'HIGH' region motif is present at residues 30-40 (PTVYNMPHIGN). Zn(2+)-binding residues include Cys-213, His-238, and Glu-242. A 'KMSKS' region motif is present at residues 270-274 (KMSKS). Lys-273 lines the ATP pocket.

Belongs to the class-I aminoacyl-tRNA synthetase family. Zn(2+) is required as a cofactor.

Its subcellular location is the cytoplasm. The enzyme catalyses tRNA(Cys) + L-cysteine + ATP = L-cysteinyl-tRNA(Cys) + AMP + diphosphate. In Methanosarcina acetivorans (strain ATCC 35395 / DSM 2834 / JCM 12185 / C2A), this protein is Cysteine--tRNA ligase.